The sequence spans 137 residues: Small ribosomal subunit protein uS11 (137 aa).

A compositionally biased stretch (polar residues) spans 1–10; it reads MPPKSRSTGP. 2 disordered regions span residues 1-27 and 116-137; these read MPPK…IPHG and GTIS…RRRV. The span at 12 to 21 shows a compositional bias: basic residues; the sequence is KTQKTRRRDK.

It belongs to the universal ribosomal protein uS11 family. As to quaternary structure, part of the 30S ribosomal subunit. Interacts with proteins S7 and S18. Binds to IF-3.

Located on the platform of the 30S subunit, it bridges several disparate RNA helices of the 16S rRNA. Forms part of the Shine-Dalgarno cleft in the 70S ribosome. The chain is Small ribosomal subunit protein uS11 from Rhodococcus erythropolis (strain PR4 / NBRC 100887).